Here is a 142-residue protein sequence, read N- to C-terminus: Large ribosomal subunit protein uL11 (142 aa).

The protein belongs to the universal ribosomal protein uL11 family. As to quaternary structure, part of the ribosomal stalk of the 50S ribosomal subunit. Interacts with L10 and the large rRNA to form the base of the stalk. L10 forms an elongated spine to which L12 dimers bind in a sequential fashion forming a multimeric L10(L12)X complex. In terms of processing, one or more lysine residues are methylated.

In terms of biological role, forms part of the ribosomal stalk which helps the ribosome interact with GTP-bound translation factors. This Shewanella amazonensis (strain ATCC BAA-1098 / SB2B) protein is Large ribosomal subunit protein uL11.